Here is a 147-residue protein sequence, read N- to C-terminus: Deoxyuridine 5'-triphosphate nucleotidohydrolase (147 aa).

Substrate-binding positions include 67 to 69, Asn-80, and 84 to 86; these read RSG and LID.

This sequence belongs to the dUTPase family. Mg(2+) serves as cofactor.

It catalyses the reaction dUTP + H2O = dUMP + diphosphate + H(+). The protein operates within pyrimidine metabolism; dUMP biosynthesis; dUMP from dCTP (dUTP route): step 2/2. Its function is as follows. This enzyme is involved in nucleotide metabolism: it produces dUMP, the immediate precursor of thymidine nucleotides and it decreases the intracellular concentration of dUTP so that uracil cannot be incorporated into DNA. The sequence is that of Deoxyuridine 5'-triphosphate nucleotidohydrolase from Gloeobacter violaceus (strain ATCC 29082 / PCC 7421).